The following is a 154-amino-acid chain: MKTFTATPADIEKKWILIDAEGVVLGRLATIVANILRGKNKPTFTPHMDMGDNVIIINADKVQMTGNKRADKRYYWHTGHPGGIKFRTAAQVLDGAHPERVVIKAVERMISRNSLGRQQMTNLRVYAGAEHPHEAQQPTVLDVASLNPKNTRSA.

The protein belongs to the universal ribosomal protein uL13 family. Part of the 50S ribosomal subunit.

In terms of biological role, this protein is one of the early assembly proteins of the 50S ribosomal subunit, although it is not seen to bind rRNA by itself. It is important during the early stages of 50S assembly. The chain is Large ribosomal subunit protein uL13 from Cereibacter sphaeroides (strain ATCC 17025 / ATH 2.4.3) (Rhodobacter sphaeroides).